A 420-amino-acid chain; its full sequence is Glycogen synthase kinase-3 beta (420 aa).

Residues 1–24 (MSGRPRTTSFAESCKPVQQPSSFG) show a composition bias toward polar residues. A disordered region spans residues 1 to 50 (MSGRPRTTSFAESCKPVQQPSSFGSMKVSRDKDGSKVTTVVATPGQGPDR). Residues 56-340 (YTDTKVIGNG…PLDACAHSFF (285 aa)) enclose the Protein kinase domain. ATP contacts are provided by residues 62-70 (IGNGSFGVV) and Lys-85. Asp-181 serves as the catalytic Proton acceptor. The disordered stretch occupies residues 384 to 420 (NQAAVSTTSNTTSTSDSNTGERGSTNNAASASASNSS). 2 stretches are compositionally biased toward low complexity: residues 389 to 401 (STTS…SDSN) and 409 to 420 (NNAASASASNSS).

This sequence belongs to the protein kinase superfamily. CMGC Ser/Thr protein kinase family. GSK-3 subfamily. Phosphorylated. Activated by phosphorylation at Tyr-216.

The protein resides in the cytoplasm. It localises to the nucleus. Its subcellular location is the cell membrane. The enzyme catalyses L-seryl-[tau protein] + ATP = O-phospho-L-seryl-[tau protein] + ADP + H(+). The catalysed reaction is L-threonyl-[tau protein] + ATP = O-phospho-L-threonyl-[tau protein] + ADP + H(+). Plays a role in the organization of the formation of the main body axis of developing embryo. Acts as an inhibitor of differentiation of primary neurons. Inhibits the ability of ectopically expressed NEUROD1 and other bHLH factors to promote early retinal cell differentiation. May participate in the Wnt signaling pathway. May regulate the circadian clock via phosphorylation of the major clock components. This Xenopus laevis (African clawed frog) protein is Glycogen synthase kinase-3 beta (gsk3b).